A 370-amino-acid chain; its full sequence is Dual-specificity RNA methyltransferase RlmN (370 aa).

Glu-93 acts as the Proton acceptor in catalysis. The Radical SAM core domain occupies 99 to 337 (AEGRGTLCVS…VTTVRKTRGD (239 aa)). A disulfide bridge connects residues Cys-106 and Cys-343. The [4Fe-4S] cluster site is built by Cys-113, Cys-117, and Cys-120. S-adenosyl-L-methionine-binding positions include 167–168 (GE), Ser-199, 221–223 (SLH), and Asn-300. Catalysis depends on Cys-343, which acts as the S-methylcysteine intermediate.

The protein belongs to the radical SAM superfamily. RlmN family. Requires [4Fe-4S] cluster as cofactor.

It is found in the cytoplasm. The catalysed reaction is adenosine(2503) in 23S rRNA + 2 reduced [2Fe-2S]-[ferredoxin] + 2 S-adenosyl-L-methionine = 2-methyladenosine(2503) in 23S rRNA + 5'-deoxyadenosine + L-methionine + 2 oxidized [2Fe-2S]-[ferredoxin] + S-adenosyl-L-homocysteine. It catalyses the reaction adenosine(37) in tRNA + 2 reduced [2Fe-2S]-[ferredoxin] + 2 S-adenosyl-L-methionine = 2-methyladenosine(37) in tRNA + 5'-deoxyadenosine + L-methionine + 2 oxidized [2Fe-2S]-[ferredoxin] + S-adenosyl-L-homocysteine. Its function is as follows. Specifically methylates position 2 of adenine 2503 in 23S rRNA and position 2 of adenine 37 in tRNAs. m2A2503 modification seems to play a crucial role in the proofreading step occurring at the peptidyl transferase center and thus would serve to optimize ribosomal fidelity. The polypeptide is Dual-specificity RNA methyltransferase RlmN (Francisella tularensis subsp. tularensis (strain FSC 198)).